Reading from the N-terminus, the 367-residue chain is 3-dehydroquinate synthase (367 aa).

Residues 99 to 103 (GVVGD), 123 to 124 (TT), Lys136, Lys145, and 163 to 166 (FLRT) each bind NAD(+). Zn(2+) contacts are provided by Glu178, His242, and His259.

The protein belongs to the sugar phosphate cyclases superfamily. Dehydroquinate synthase family. It depends on Co(2+) as a cofactor. The cofactor is Zn(2+). NAD(+) serves as cofactor.

The protein resides in the cytoplasm. The catalysed reaction is 7-phospho-2-dehydro-3-deoxy-D-arabino-heptonate = 3-dehydroquinate + phosphate. It functions in the pathway metabolic intermediate biosynthesis; chorismate biosynthesis; chorismate from D-erythrose 4-phosphate and phosphoenolpyruvate: step 2/7. Its function is as follows. Catalyzes the conversion of 3-deoxy-D-arabino-heptulosonate 7-phosphate (DAHP) to dehydroquinate (DHQ). The protein is 3-dehydroquinate synthase of Chlorobaculum parvum (strain DSM 263 / NCIMB 8327) (Chlorobium vibrioforme subsp. thiosulfatophilum).